Here is a 141-residue protein sequence, read N- to C-terminus: Large ribosomal subunit protein uL11 (141 aa).

The protein belongs to the universal ribosomal protein uL11 family. Part of the ribosomal stalk of the 50S ribosomal subunit. Interacts with L10 and the large rRNA to form the base of the stalk. L10 forms an elongated spine to which L12 dimers bind in a sequential fashion forming a multimeric L10(L12)X complex. One or more lysine residues are methylated.

Its function is as follows. Forms part of the ribosomal stalk which helps the ribosome interact with GTP-bound translation factors. The chain is Large ribosomal subunit protein uL11 from Synechococcus sp. (strain CC9311).